The primary structure comprises 142 residues: Large ribosomal subunit protein uL11 (142 aa).

It belongs to the universal ribosomal protein uL11 family. As to quaternary structure, part of the ribosomal stalk of the 50S ribosomal subunit. Interacts with L10 and the large rRNA to form the base of the stalk. L10 forms an elongated spine to which L12 dimers bind in a sequential fashion forming a multimeric L10(L12)X complex. Post-translationally, one or more lysine residues are methylated.

Forms part of the ribosomal stalk which helps the ribosome interact with GTP-bound translation factors. This Brucella anthropi (strain ATCC 49188 / DSM 6882 / CCUG 24695 / JCM 21032 / LMG 3331 / NBRC 15819 / NCTC 12168 / Alc 37) (Ochrobactrum anthropi) protein is Large ribosomal subunit protein uL11.